The following is a 225-amino-acid chain: PKHD-type hydroxylase YbiX (225 aa).

Positions 78–177 (TLSTPLFNRY…RVASFMWIQS (100 aa)) constitute a Fe2OG dioxygenase domain. Residues H96, D98, and H158 each coordinate Fe cation. Position 168 (R168) interacts with 2-oxoglutarate.

It depends on Fe(2+) as a cofactor. The cofactor is L-ascorbate.

This Shigella boydii serotype 18 (strain CDC 3083-94 / BS512) protein is PKHD-type hydroxylase YbiX.